Reading from the N-terminus, the 71-residue chain is uncharacterized protein (71 aa).

This is an uncharacterized protein from Haemophilus influenzae (strain ATCC 51907 / DSM 11121 / KW20 / Rd).